The primary structure comprises 608 residues: Granule-bound starch synthase 1, chloroplastic/amyloplastic (608 aa).

Residues Met1–Val76 constitute a chloroplast transit peptide. An ADP-alpha-D-glucose-binding site is contributed by Lys96.

Belongs to the glycosyltransferase 1 family. Bacterial/plant glycogen synthase subfamily.

It localises to the plastid. The protein resides in the chloroplast. Its subcellular location is the amyloplast. It carries out the reaction an NDP-alpha-D-glucose + [(1-&gt;4)-alpha-D-glucosyl](n) = [(1-&gt;4)-alpha-D-glucosyl](n+1) + a ribonucleoside 5'-diphosphate + H(+). It functions in the pathway glycan biosynthesis; starch biosynthesis. Required for the synthesis of amylose. In Ipomoea batatas (Sweet potato), this protein is Granule-bound starch synthase 1, chloroplastic/amyloplastic (WAXY).